Here is a 354-residue protein sequence, read N- to C-terminus: MEQKQRRFTKNIFVLDITAKTLCGAIAKLSSQPYCQIKIGRVVAFKPVKNPEPKGYVLNVPGPGAYRIQDGQDIISLMLTPHGVEATTERWEEWKFEGVSVTPMATRVQYNGVMVDAEIKYCKGMGIVQPYMRNDFDRNEMPDLPGVMRSNYDIRELRQKIKNERESAPRLQVQSVASREESRWMDDDEAKVDNEAKEIIPGTSGLEKLREARSNVFKEVETVINWNLDERDEEDRDERGDEEQVKTLSDDDDQGEDASDDEHPKTHITKEYIEKVAKQIKLKDERFMSLSSAMPQASGGFDRMIVTKKLKWQNVPLYCFDESLKRYELQCVGACERVAFVSKDMSLIILPVGV.

Disordered stretches follow at residues 163–196 and 229–269; these read NERE…DNEA and DERD…THIT. Basic and acidic residues-rich tracts occupy residues 178 to 196 and 237 to 249; these read SREE…DNEA and DERG…KTLS. Residues 250–260 show a composition bias toward acidic residues; that stretch reads DDDDQGEDASD.

In terms of biological role, single-stranded RNA-binding protein. This chain is Non-structural protein NS2 (Segment-8), found in Bluetongue virus 17 (isolate USA) (BTV 17).